The following is a 927-amino-acid chain: Ribosome-releasing factor 2, mitochondrial (927 aa).

The transit peptide at 1–57 (MVTAPLLGWVAVRPIPRLSKLNTCKYVSSSLQSYKRSVGSCLGKQQSRDFSYSATLT) directs the protein to the mitochondrion. Positions 64–379 (EKTRNIGIIA…AVNNLLPGPS (316 aa)) constitute a tr-type G domain. Residues 73 to 80 (AHIDAGKT), 163 to 167 (DTPGH), and 217 to 220 (NKLD) each bind GTP.

This sequence belongs to the TRAFAC class translation factor GTPase superfamily. Classic translation factor GTPase family. EF-G/EF-2 subfamily.

The protein resides in the mitochondrion. Mitochondrial GTPase that mediates the disassembly of ribosomes from messenger RNA at the termination of mitochondrial protein biosynthesis. Not involved in the GTP-dependent ribosomal translocation step during translation elongation. The protein is Ribosome-releasing factor 2, mitochondrial (mef2) of Talaromyces marneffei (strain ATCC 18224 / CBS 334.59 / QM 7333) (Penicillium marneffei).